The primary structure comprises 360 residues: Phospho-N-acetylmuramoyl-pentapeptide-transferase (360 aa).

10 helical membrane passes run A26–A46, P72–Y92, S94–V114, W132–G152, V168–G188, G199–T219, A236–F256, V263–L283, F288–V308, and V338–K358.

Belongs to the glycosyltransferase 4 family. MraY subfamily. It depends on Mg(2+) as a cofactor.

It is found in the cell inner membrane. The catalysed reaction is UDP-N-acetyl-alpha-D-muramoyl-L-alanyl-gamma-D-glutamyl-meso-2,6-diaminopimeloyl-D-alanyl-D-alanine + di-trans,octa-cis-undecaprenyl phosphate = di-trans,octa-cis-undecaprenyl diphospho-N-acetyl-alpha-D-muramoyl-L-alanyl-D-glutamyl-meso-2,6-diaminopimeloyl-D-alanyl-D-alanine + UMP. It functions in the pathway cell wall biogenesis; peptidoglycan biosynthesis. Catalyzes the initial step of the lipid cycle reactions in the biosynthesis of the cell wall peptidoglycan: transfers peptidoglycan precursor phospho-MurNAc-pentapeptide from UDP-MurNAc-pentapeptide onto the lipid carrier undecaprenyl phosphate, yielding undecaprenyl-pyrophosphoryl-MurNAc-pentapeptide, known as lipid I. In Enterobacter sp. (strain 638), this protein is Phospho-N-acetylmuramoyl-pentapeptide-transferase.